A 353-amino-acid chain; its full sequence is MRVVKRIAVACYLGITIFSGIAFGYEGSFPSSSLEQNPSGVAIHNRVLFKIDEDTVVTTLDVIHKLNILFYSTCPQLVDSVSARSQYYSAMWPVVLESVINEFLMAADAKEKKIFIDPTSVNQEIEAMFGRDLSPFAKFFDMTPGDIFNVVHRVLVAQRIEGMMVRSRVMLKVTPGMVRDRYQKLVEDASQVSQWTYRVLTIKAGSELLANKIAGKVQERLNEGDSWDKERLAAMVLSQGGQLICSDEFIREDAQLSAAHKKALEEINFPEERCGKALEHASGLKLFVLFDCSTKTLEPLEKMEAQIKQRLMMELAEEEEANYKNKLRARYGFDPSIITQLLSEDAPQLFSLL.

A signal peptide spans 1 to 24 (MRVVKRIAVACYLGITIFSGIAFG).

The protein belongs to the chlamydial CPn_1058/CT_355/TC_0634 family.

This is an uncharacterized protein from Chlamydia muridarum (strain MoPn / Nigg).